Consider the following 208-residue polypeptide: Outer-membrane lipoprotein carrier protein (208 aa).

The first 22 residues, 1–22 (MRKTLSILAISLPLLVSGYAQA), serve as a signal peptide directing secretion.

This sequence belongs to the LolA family. In terms of assembly, monomer.

The protein resides in the periplasm. Participates in the translocation of lipoproteins from the inner membrane to the outer membrane. Only forms a complex with a lipoprotein if the residue after the N-terminal Cys is not an aspartate (The Asp acts as a targeting signal to indicate that the lipoprotein should stay in the inner membrane). This chain is Outer-membrane lipoprotein carrier protein, found in Shewanella sediminis (strain HAW-EB3).